Here is a 342-residue protein sequence, read N- to C-terminus: Cystein proteinase inhibitor protein salarin (342 aa).

The N-terminal stretch at 1–19 (MKSLVLLLLVAVTVSSVVS) is a signal peptide. N-linked (GlcNAc) asparagine glycosylation occurs at asparagine 153. The O-linked (GlcNAc) threonine glycan is linked to threonine 184.

Post-translationally, N-glycosylated, with sialylated biantennary complex-type glycans. In terms of processing, O-glycosylated, with sialylated oligosaccharides. As to expression, expressed in the skin, liver. intestine, spleen, pancreas and kidney.

It localises to the cytoplasm. The protein resides in the vacuole. Functionally, inhibits papain and ficin (cysteine proteinases) but not trypsin (a serine proteinase). The polypeptide is Cystein proteinase inhibitor protein salarin (salarin) (Salmo salar (Atlantic salmon)).